The chain runs to 120 residues: Large ribosomal subunit protein uL14 (120 aa).

The protein belongs to the universal ribosomal protein uL14 family. Part of the 50S ribosomal subunit. Forms a cluster with proteins L3 and L19. In the 70S ribosome, L14 and L19 interact and together make contacts with the 16S rRNA in bridges B5 and B8.

Functionally, binds to 23S rRNA. Forms part of two intersubunit bridges in the 70S ribosome. This Aster yellows witches'-broom phytoplasma (strain AYWB) protein is Large ribosomal subunit protein uL14.